The sequence spans 737 residues: ARMADILLO BTB ARABIDOPSIS PROTEIN 1 (737 aa).

ARM repeat units follow at residues 112–154 (DENV…KDCA), 165–212 (PGYQ…NIAH), 215–254 (PRIKTNIRVEGGIAPLVELLNFPDVKVQRAAAGALRTVSF), 257–296 (DENKSQIVELNALPTLVLMLQSQDSTVHGEAIGAIGNLVH), 299–338 (PDIKKEVIRAGALQPVIGLLSSTCLETQREAALLIGQFAA), 341–380 (SDCKVHIAQRGAITPLIKMLESSDEQVVEMSAFALGRLAQ), 382–421 (AHNQAGIAHRGGIISLLNLLDVKTGSVQHNAAFALYGLAD), 456–495 (LKRLQNKIHGPVLNQLLYLMRTAEKTVQIRIALALAHLCD), and 497–536 (KDGKLIFIDNNGVEFLLELLYFSSNKQQRYSSSALYELAK). Residues 568–635 (SDVTFLIDGK…IYSGRINIAK (68 aa)) enclose the BTB domain.

In terms of assembly, forms a heterodimeric complex with TCP24. Interacts with the origin recognition complex (preRC) components ORC1A, ORC1B, CDT1A and CDT1B. Interacts with DUF7/AIP1. In terms of tissue distribution, weakly expressed in the emerging lateral roots and mainly expressed in the shoot apex, young leaves and flower buds.

It is found in the nucleus. The protein operates within protein modification; protein ubiquitination. Functionally, may act as a substrate-specific adapter of an E3 ubiquitin-protein ligase complex (CUL3-RBX1-BTB) which mediates the ubiquitination and subsequent proteasomal degradation of target proteins. In association with TCP24, exerts a negative role in cell proliferation in leaves, possibly by inhibiting mitotic DNA replication. This is ARMADILLO BTB ARABIDOPSIS PROTEIN 1 (ABAP1) from Arabidopsis thaliana (Mouse-ear cress).